A 141-amino-acid polypeptide reads, in one-letter code: Protein GAT3 (141 aa).

The segment at 72–98 (CPQCAVIKTSPQWREGPDGEVTLCNAC) adopts a GATA-type zinc-finger fold.

In Saccharomyces cerevisiae (strain ATCC 204508 / S288c) (Baker's yeast), this protein is Protein GAT3 (GAT3).